Consider the following 79-residue polypeptide: MNCYLILTVALLLTSAMTGTTTAGQLNKKGVTLREDDGFPCNAGNCACLPLDSYSYTCQSPTSSTANCEGNECVSEADW.

A signal peptide spans 1 to 23 (MNCYLILTVALLLTSAMTGTTTA). The propeptide occupies 24–33 (GQLNKKGVTL). Disulfide bonds link C41-C58, C46-C68, and C48-C73.

As to expression, expressed by the venom duct.

It localises to the secreted. Its function is as follows. Probable neurotoxin with unknown target. Possibly targets ion channels. This chain is Conotoxin Cal9.2a, found in Californiconus californicus (California cone).